Reading from the N-terminus, the 660-residue chain is MDQMKEMEQLVKQLNEYSYKYYVLDQPIVSDKEYDSLYDQLIELEEKTGHVLLDSPTQRVGGEPLKKFQSHQHVALLWSLDKAKTAEELVAWEQRIKKKLESNHEIEYIVEYKFDGLTLNLTYENGELVQAATRGNGVVGESIIEQVKTIQAIPLGVDFNNKMEIQGEGLMAISTLAQYNKTAKEPLKNPRNAAAGALRNLDPKVTAKRKLGAFCYSIGYYEGMEFETHIQMIDFLKKNRFPVSNYIKSCKGIDQVIEQIREVEAGMKELDYLTDGIVIKVNDLRTREILGYTQKFPRWAIAYKFEAQEVTTKLEAVLWQVGRTGKLTPAAQLEPVEIAGVTVSRATLNNWEDIQRKKVKVGCQVWLRRSGDVIPEIMGAIEETCEEAVEIEKPQHCPACDSEIVHRGVHIFCPNSLSCKPQLVSRIVHYASRDAMDIEGFSEKTAEQLFEALGLKNIAALYELKYEDLIQLERFGDKKAKNLLDAIEESKTCKLDAFIYALGIPNVGRKTAADLANYFGDLEKIQRANYDELVVLPDIGGIVAQSIVGFFEDEKIIKSIELLLAEGIKPQHKMKNRQESIFSGKTVVVTGTLENYGRKEIQTLLEEQGAKVSGSISKNTDFVIAGDNAGSKLKKAQEILESGVETNLQILDEAAFEALL.

NAD(+) contacts are provided by residues 31–35, 79–80, and Glu111; these read DKEYD and SL. Lys113 acts as the N6-AMP-lysine intermediate in catalysis. Positions 134, 168, 280, and 304 each coordinate NAD(+). Residues Cys397, Cys400, Cys413, and Cys419 each contribute to the Zn(2+) site. One can recognise a BRCT domain in the interval 577–660; it reads RQESIFSGKT…LDEAAFEALL (84 aa).

Belongs to the NAD-dependent DNA ligase family. LigA subfamily. Mg(2+) serves as cofactor. The cofactor is Mn(2+).

The catalysed reaction is NAD(+) + (deoxyribonucleotide)n-3'-hydroxyl + 5'-phospho-(deoxyribonucleotide)m = (deoxyribonucleotide)n+m + AMP + beta-nicotinamide D-nucleotide.. DNA ligase that catalyzes the formation of phosphodiester linkages between 5'-phosphoryl and 3'-hydroxyl groups in double-stranded DNA using NAD as a coenzyme and as the energy source for the reaction. It is essential for DNA replication and repair of damaged DNA. The chain is DNA ligase from Alkaliphilus metalliredigens (strain QYMF).